Reading from the N-terminus, the 281-residue chain is Phosphonates import ATP-binding protein PhnC (281 aa).

Residues 2 to 245 (FELKDVTRRF…AVKEIYGTDK (244 aa)) form the ABC transporter domain. 34 to 41 (GRSGAGKS) contacts ATP.

It belongs to the ABC transporter superfamily. Phosphonates importer (TC 3.A.1.9.1) family. The complex is composed of two ATP-binding proteins (PhnC), two transmembrane proteins (PhnE) and a solute-binding protein (PhnD).

The protein resides in the cell inner membrane. It catalyses the reaction phosphonate(out) + ATP + H2O = phosphonate(in) + ADP + phosphate + H(+). In terms of biological role, part of the ABC transporter complex PhnCDE involved in phosphonates import. Responsible for energy coupling to the transport system. This is Phosphonates import ATP-binding protein PhnC from Rhizobium etli (strain ATCC 51251 / DSM 11541 / JCM 21823 / NBRC 15573 / CFN 42).